The following is a 101-amino-acid chain: Large ribosomal subunit protein uL23 (101 aa).

The protein belongs to the universal ribosomal protein uL23 family. In terms of assembly, part of the 50S ribosomal subunit. Contacts protein L29, and trigger factor when it is bound to the ribosome.

Its function is as follows. One of the early assembly proteins it binds 23S rRNA. One of the proteins that surrounds the polypeptide exit tunnel on the outside of the ribosome. Forms the main docking site for trigger factor binding to the ribosome. This is Large ribosomal subunit protein uL23 from Thiobacillus denitrificans (strain ATCC 25259 / T1).